A 131-amino-acid chain; its full sequence is NADH dehydrogenase [ubiquinone] 1 alpha subcomplex subunit 6 (131 aa).

Belongs to the complex I LYR family. As to quaternary structure, mammalian complex I is composed of 45 different subunits.

It is found in the mitochondrion inner membrane. Accessory subunit of the mitochondrial membrane respiratory chain NADH dehydrogenase (Complex I), that is believed to be not involved in catalysis. Required for proper complex I assembly. Complex I functions in the transfer of electrons from NADH to the respiratory chain. The immediate electron acceptor for the enzyme is believed to be ubiquinone. The polypeptide is NADH dehydrogenase [ubiquinone] 1 alpha subcomplex subunit 6 (Mus musculus (Mouse)).